We begin with the raw amino-acid sequence, 256 residues long: MATLISLNDANRMLIAESQEDFLQIACYDWISTANKAIQKRGAFYVALSGGKTPLQIFQEIVKKRAAISDCSKIFVFWGDERASEDTEAGSNYLKAMDILKWLRIPDTQIFRMDTANPKGDEIYENLIREHVPDTIFDMVMLGVGEDGHTLSLFPGTAALEEKDRLVVFNEVPQLQTRRMTLTFPIVRQARHLVAYIQGTAKQDLCHKLLHPLGRDTFPIERVGTPLNPLQWVLSSDCCRAADLADIPAECKLEMF.

This sequence belongs to the glucosamine/galactosamine-6-phosphate isomerase family. 6-phosphogluconolactonase subfamily.

The catalysed reaction is 6-phospho-D-glucono-1,5-lactone + H2O = 6-phospho-D-gluconate + H(+). It participates in carbohydrate degradation; pentose phosphate pathway; D-ribulose 5-phosphate from D-glucose 6-phosphate (oxidative stage): step 2/3. In terms of biological role, hydrolysis of 6-phosphogluconolactone to 6-phosphogluconate. The chain is 6-phosphogluconolactonase (pgl) from Chlamydia muridarum (strain MoPn / Nigg).